We begin with the raw amino-acid sequence, 470 residues long: Argininosuccinate lyase (470 aa).

The protein belongs to the lyase 1 family. Argininosuccinate lyase subfamily.

The protein resides in the cytoplasm. It carries out the reaction 2-(N(omega)-L-arginino)succinate = fumarate + L-arginine. It functions in the pathway amino-acid biosynthesis; L-arginine biosynthesis; L-arginine from L-ornithine and carbamoyl phosphate: step 3/3. This chain is Argininosuccinate lyase, found in Leptospira borgpetersenii serovar Hardjo-bovis (strain JB197).